We begin with the raw amino-acid sequence, 432 residues long: Enolase (432 aa).

Gln-167 contacts (2R)-2-phosphoglycerate. Glu-209 serves as the catalytic Proton donor. Mg(2+)-binding residues include Asp-246, Glu-290, and Asp-317. Residues Lys-342, Arg-371, Ser-372, and Lys-393 each coordinate (2R)-2-phosphoglycerate. The Proton acceptor role is filled by Lys-342.

Belongs to the enolase family. In terms of assembly, component of the RNA degradosome, a multiprotein complex involved in RNA processing and mRNA degradation. Mg(2+) serves as cofactor.

The protein localises to the cytoplasm. The protein resides in the secreted. Its subcellular location is the cell surface. The catalysed reaction is (2R)-2-phosphoglycerate = phosphoenolpyruvate + H2O. Its pathway is carbohydrate degradation; glycolysis; pyruvate from D-glyceraldehyde 3-phosphate: step 4/5. In terms of biological role, catalyzes the reversible conversion of 2-phosphoglycerate (2-PG) into phosphoenolpyruvate (PEP). It is essential for the degradation of carbohydrates via glycolysis. The chain is Enolase from Salmonella agona (strain SL483).